A 1461-amino-acid chain; its full sequence is A disintegrin and metalloproteinase with thrombospondin motifs adt-1 (1461 aa).

Residues 1–21 form the signal peptide; sequence MPPFYIVITFLLSTVFRISQS. Positions 22–163 are excised as a propeptide; the sequence is VHHHLNEEEL…HLQKERHLVY (142 aa). N-linked (GlcNAc...) asparagine glycosylation occurs at asparagine 69. The short motif at 190–197 is the Cysteine switch element; it reads SFCDTSEQ. Asparagine 212 is a glycosylation site (N-linked (GlcNAc...) asparagine). In terms of domain architecture, Peptidase M12B spans 233 to 435; the sequence is ITLEIGLFLD…CSVREFNAFL (203 aa). Histidine 388 serves as a coordination point for Zn(2+). The active site involves glutamate 389. Positions 392 and 398 each coordinate Zn(2+). Cysteine 405 and cysteine 410 are joined by a disulfide. Positions 464-546 constitute a Disintegrin domain; the sequence is RLPGQRFTAD…TFGLTPVPID (83 aa). TSP type-1 domains are found at residues 708–759, 761–802, 804–852, 853–898, 903–952, 955–1000, 1035–1083, 1087–1133, 1148–1200, 1203–1260, 1265–1321, 1324–1378, and 1382–1435; these read HQWE…RDCE, FGEW…RPCD, EGCW…QKCI, SQSW…QQCP, LSVW…GPCE, YLTW…IACL, SIHS…NSCL, IWSD…PSCS, APRW…GSCS, AGGW…NVCS, DGGW…ARCH, DGGW…PACD, and DGEW…RQSP. 3 disulfides stabilise this stretch: cysteine 719/cysteine 751, cysteine 723/cysteine 758, and cysteine 735/cysteine 741. Cystine bridges form between cysteine 816–cysteine 846, cysteine 820–cysteine 851, cysteine 831–cysteine 836, cysteine 862–cysteine 892, cysteine 866–cysteine 897, and cysteine 877–cysteine 882. Disulfide bonds link cysteine 1047-cysteine 1077, cysteine 1051-cysteine 1082, and cysteine 1062-cysteine 1067. 12 cysteine pairs are disulfide-bonded: cysteine 1160–cysteine 1194, cysteine 1162–cysteine 1199, cysteine 1173–cysteine 1184, cysteine 1215–cysteine 1253, cysteine 1219–cysteine 1259, cysteine 1231–cysteine 1243, cysteine 1277–cysteine 1314, cysteine 1281–cysteine 1320, cysteine 1292–cysteine 1304, cysteine 1336–cysteine 1372, cysteine 1340–cysteine 1377, and cysteine 1351–cysteine 1362.

Zn(2+) is required as a cofactor. In terms of tissue distribution, in hermaphrodites, expressed in the vulva, head ganglia, ventral nerve cord and amphid neurons. Expressed in the rays of the male tail.

The protein resides in the secreted. In terms of biological role, plays a role in ray morphogenesis in the male tail, probably by remodeling the extracellular matrix (ECM) in the cuticle. This Caenorhabditis elegans protein is A disintegrin and metalloproteinase with thrombospondin motifs adt-1.